We begin with the raw amino-acid sequence, 309 residues long: Malate dehydrogenase (309 aa).

NAD(+) is bound by residues 9 to 14 (GAGFVG) and Asp-33. Substrate contacts are provided by Arg-82 and Arg-88. NAD(+)-binding positions include Asn-95 and 118–120 (VNN). 2 residues coordinate substrate: Asn-120 and Arg-151. Residue His-175 is the Proton acceptor of the active site.

This sequence belongs to the LDH/MDH superfamily. MDH type 3 family.

The enzyme catalyses (S)-malate + NAD(+) = oxaloacetate + NADH + H(+). Catalyzes the reversible oxidation of malate to oxaloacetate. In Chloroflexus aurantiacus (strain ATCC 29364 / DSM 637 / Y-400-fl), this protein is Malate dehydrogenase.